We begin with the raw amino-acid sequence, 71 residues long: Cruzioseptin-2 (71 aa).

Residues 1-22 form the signal peptide; it reads MAFLKKSLFLVLFLGLVSLSIC. The propeptide occupies 23-43; the sequence is EEEKREEENEEVQEDDDQSEE. Residue Gln68 is modified to Glutamine amide. Residues 70–71 constitute a propeptide that is removed on maturation; that stretch reads EQ.

Expressed by the skin glands.

The protein resides in the secreted. In terms of biological role, has antimicrobial activity against Gram-negative bacterium E.coli (MIC=26.35 uM), against Gram-positive bacterium S.aureus (MIC=6.59 uM) and against fungus C.albicans (MIC=13.18 uM). At higher concentrations also has a bactericidal and fungicidal effect. Has hemagglutinating activity against horse erythrocytes. This Cruziohyla calcarifer (Splendid leaf frog) protein is Cruzioseptin-2.